We begin with the raw amino-acid sequence, 109 residues long: Spermidine export protein MdtI (109 aa).

4 consecutive transmembrane segments (helical) span residues 6–26, 36–56, 64–84, and 88–108; these read FYPI…NILL, WLGI…AQAV, AYAL…WILF, and LNYK…MIKL.

This sequence belongs to the drug/metabolite transporter (DMT) superfamily. Small multidrug resistance (SMR) (TC 2.A.7.1) family. MdtI subfamily. Forms a complex with MdtJ.

The protein resides in the cell inner membrane. Its function is as follows. Catalyzes the excretion of spermidine. This chain is Spermidine export protein MdtI, found in Yersinia pseudotuberculosis serotype O:1b (strain IP 31758).